Here is a 143-residue protein sequence, read N- to C-terminus: D-aminoacyl-tRNA deacylase (143 aa).

A Gly-cisPro motif, important for rejection of L-amino acids motif is present at residues 135 to 136 (GP).

It belongs to the DTD family. As to quaternary structure, homodimer.

The protein resides in the cytoplasm. It catalyses the reaction glycyl-tRNA(Ala) + H2O = tRNA(Ala) + glycine + H(+). The catalysed reaction is a D-aminoacyl-tRNA + H2O = a tRNA + a D-alpha-amino acid + H(+). Functionally, an aminoacyl-tRNA editing enzyme that deacylates mischarged D-aminoacyl-tRNAs. Also deacylates mischarged glycyl-tRNA(Ala), protecting cells against glycine mischarging by AlaRS. Acts via tRNA-based rather than protein-based catalysis; rejects L-amino acids rather than detecting D-amino acids in the active site. By recycling D-aminoacyl-tRNA to D-amino acids and free tRNA molecules, this enzyme counteracts the toxicity associated with the formation of D-aminoacyl-tRNA entities in vivo and helps enforce protein L-homochirality. In Mycobacterium bovis (strain BCG / Pasteur 1173P2), this protein is D-aminoacyl-tRNA deacylase.